A 314-amino-acid chain; its full sequence is 2,3-dihydroxyphenylpropionate/2,3-dihydroxicinnamic acid 1,2-dioxygenase (314 aa).

The active-site Proton donor is H115. H179 (proton acceptor) is an active-site residue.

The protein belongs to the LigB/MhpB extradiol dioxygenase family. As to quaternary structure, homotetramer. Requires Fe(2+) as cofactor.

It catalyses the reaction 3-(2,3-dihydroxyphenyl)propanoate + O2 = (2Z,4E)-2-hydroxy-6-oxonona-2,4-dienedioate + H(+). The catalysed reaction is (2E)-3-(2,3-dihydroxyphenyl)prop-2-enoate + O2 = (2Z,4E,7E)-2-hydroxy-6-oxonona-2,4,7-trienedioate + H(+). Its pathway is aromatic compound metabolism; 3-phenylpropanoate degradation. Functionally, catalyzes the non-heme iron(II)-dependent oxidative cleavage of 2,3-dihydroxyphenylpropionic acid and 2,3-dihydroxicinnamic acid into 2-hydroxy-6-ketononadienedioate and 2-hydroxy-6-ketononatrienedioate, respectively. The protein is 2,3-dihydroxyphenylpropionate/2,3-dihydroxicinnamic acid 1,2-dioxygenase of Rhodococcus jostii (strain RHA1).